Here is a 374-residue protein sequence, read N- to C-terminus: GDSL esterase/lipase 1 (374 aa).

An N-terminal signal peptide occupies residues 1–25 (MENSQLVSITFLAYTIIISIGSINC). The N-linked (GlcNAc...) asparagine glycan is linked to Asn34. Residue Ser44 is the Nucleophile of the active site. Residues Asn184, Asn203, and Asn330 are each glycosylated (N-linked (GlcNAc...) asparagine). Catalysis depends on charge relay system residues Asp338 and His341. Asn360 is a glycosylation site (N-linked (GlcNAc...) asparagine).

The protein belongs to the 'GDSL' lipolytic enzyme family.

The protein resides in the secreted. In terms of biological role, confers resistance to the necrotrophic fungus Alternaria brassicicola. Possesses lipase and antimicrobial activities that directly disrupt fungal spore integrity. Triggers systemic resistance, mostly by the ethylene-dependent pathway. This chain is GDSL esterase/lipase 1, found in Arabidopsis thaliana (Mouse-ear cress).